The sequence spans 871 residues: Bifunctional cordycepin biosynthesis cluster protein 3 (871 aa).

Its pathway is secondary metabolite biosynthesis. In terms of biological role, nucleoside/nucleotide kinase; part of the gene cluster that mediates the biosynthesis of cordycepin (COR) and pentostatin (PTN), two adenosine analogs with related bioactivity profiles as both mimic adenosine and can inhibit some of the processes that are adenosine dependent. Within the pathway, cns3 catalyzes both the first step of cordycepin biosynthesis by phosphorylating adenosine into 3'-AMP via its kinase activity and the conversion of adenosine into pentostatin via its ATP phosphoribosyltransferase activity. The first step of cordycepin biosynthesis involves hydroxyl phosphorylation of the 3'-OH position on adenosine to produce adenosine-3'-monophosphate (3'-AMP), catalyzed by kinase activity of cns3. Next, 3'-AMP is dephosphorylated to 2'-carbonyl-3'-deoxyadenosine (2'-C-3'-dA) by cns2, which is finally converted to cordycepin (3'-deoxyadenosine) by the oxidoreductase cns1. The sequence is that of Bifunctional cordycepin biosynthesis cluster protein 3 from Cordyceps militaris (strain CM01) (Caterpillar fungus).